A 504-amino-acid polypeptide reads, in one-letter code: Maturase K (504 aa).

It belongs to the intron maturase 2 family. MatK subfamily.

The protein localises to the plastid. Its subcellular location is the chloroplast. Its function is as follows. Usually encoded in the trnK tRNA gene intron. Probably assists in splicing its own and other chloroplast group II introns. The chain is Maturase K from Aruncus dioicus (Goat's beard).